The following is a 397-amino-acid chain: S-adenosylmethionine synthase (397 aa).

Residue His15 coordinates ATP. Residue Asp17 participates in Mg(2+) binding. Glu43 contributes to the K(+) binding site. L-methionine is bound by residues Glu56 and Gln99. Residues 99–109 (QSGDIAMGVDE) form a flexible loop region. Residues 175-177 (DGK), 241-242 (RF), Asp250, 256-257 (RK), Ala273, and Lys277 contribute to the ATP site. Asp250 lines the L-methionine pocket. Lys281 is an L-methionine binding site.

This sequence belongs to the AdoMet synthase family. Homotetramer; dimer of dimers. Mg(2+) is required as a cofactor. It depends on K(+) as a cofactor.

It localises to the cytoplasm. It carries out the reaction L-methionine + ATP + H2O = S-adenosyl-L-methionine + phosphate + diphosphate. The protein operates within amino-acid biosynthesis; S-adenosyl-L-methionine biosynthesis; S-adenosyl-L-methionine from L-methionine: step 1/1. Its function is as follows. Catalyzes the formation of S-adenosylmethionine (AdoMet) from methionine and ATP. The overall synthetic reaction is composed of two sequential steps, AdoMet formation and the subsequent tripolyphosphate hydrolysis which occurs prior to release of AdoMet from the enzyme. The polypeptide is S-adenosylmethionine synthase (Clostridioides difficile (strain 630) (Peptoclostridium difficile)).